A 264-amino-acid polypeptide reads, in one-letter code: Claudin-18 (264 aa).

At 1-6 (MATTTC) the chain is on the cytoplasmic side. The helical transmembrane segment at 7–27 (QVVGLLLSLLGLAGCIAATGM) threads the bilayer. Residues 28–80 (DMWSTQDLYDNPVTAVFQYEGLWRSCVQQSSGFTECRPYFTILGLPAMLQAVR) are Extracellular-facing. The helical transmembrane segment at 81 to 101 (ALMIVGIVLGVIGILVSIFAL) threads the bilayer. Residues 102-122 (KCIRIGSMDDSAKAKMTLTSG) are Cytoplasmic-facing. The helical transmembrane segment at 123-143 (ILFIISGICAIIGVSVFANML) threads the bilayer. At 144–176 (VTNFWMSTANMYSGMGGMGGMVQTVQTRYTFGA) the chain is on the extracellular side. A helical membrane pass occupies residues 177–197 (ALFVGWVAGGLTLIGGVMMCI). At 198–264 (ACRGLTPDDS…QSHPTKYDYV (67 aa)) the chain is on the cytoplasmic side. Residues 198–264 (ACRGLTPDDS…QSHPTKYDYV (67 aa)) form a required for role in regulation of RANKL-induced osteoclast differentiation region. Residue Ser-217 is modified to Phosphoserine. The segment at 241–264 (KKIYDGGARTEDDEQSHPTKYDYV) is disordered. Residues 242 to 264 (KIYDGGARTEDDEQSHPTKYDYV) are compositionally biased toward basic and acidic residues.

It belongs to the claudin family. As to quaternary structure, interacts with TJP2/ZO-2. Interacts with TJP1/ZO-1. Interacts with YAP1 (phosphorylated); the interaction sequesters YAP1 away from the nucleus and thereby restricts transcription of YAP1 target genes. In terms of assembly, interacts with CLDN19. Expressed in the lung (at protein level). In terms of tissue distribution, expressed in lung. Expressed in the stomach. As to expression, expressed in lung. Expressed in stomach. Expressed in bone. In terms of tissue distribution, expressed in stomach.

Its subcellular location is the cell junction. It is found in the tight junction. The protein localises to the cell membrane. It localises to the lateral cell membrane. Involved in alveolar fluid homeostasis via regulation of alveolar epithelial tight junction composition and therefore ion transport and solute permeability, potentially via downstream regulation of the actin cytoskeleton organization and beta-2-adrenergic signaling. Required for lung alveolarization and maintenance of the paracellular alveolar epithelial barrier. Acts to maintain epithelial progenitor cell proliferation and organ size, via regulation of YAP1 localization away from the nucleus and thereby restriction of YAP1 target gene transcription. Acts as a negative regulator of RANKL-induced osteoclast differentiation, potentially via relocation of TJP2/ZO-2 away from the nucleus, subsequently involved in bone resorption in response to calcium deficiency. Mediates the osteoprotective effects of estrogen, potentially via acting downstream of estrogen signaling independently of RANKL signaling pathways. Its function is as follows. Involved in the maintenance of homeostasis of the alveolar microenvironment via regulation of pH and subsequent T-cell activation in the alveolar space, is therefore indirectly involved in limiting C.neoformans infection. In terms of biological role, required for the formation of the gastric paracellular barrier via its role in tight junction formation, thereby involved in the response to gastric acidification. The chain is Claudin-18 (Cldn18) from Mus musculus (Mouse).